Consider the following 965-residue polypeptide: Calsyntenin-2 (965 aa).

Positions 1 to 20 (MLPGRLCLVPLLLALGVGSG) are cleaved as a signal peptide. Residues 21 to 835 (GGSGDGGDSR…SIQRSSVVPS (815 aa)) are Extracellular-facing. 2 consecutive Cadherin domains span residues 46-162 (IETS…APTF) and 163-282 (KEPA…MPLF). N-linked (GlcNAc...) asparagine glycosylation is found at Asn-58 and Asn-100. N-linked (GlcNAc...) asparagine glycans are attached at residues Asn-344, Asn-376, Asn-720, and Asn-733. The helical transmembrane segment at 836–856 (IATVVIIISVCMLVFVVAMGV) threads the bilayer. Residues 857–965 (YRVRIAHQHF…NTAGVINIWK (109 aa)) lie on the Cytoplasmic side of the membrane. The disordered stretch occupies residues 891 to 965 (PMEKHEGPGH…NTAGVINIWK (75 aa)). Residues 892–902 (MEKHEGPGHGE) show a composition bias toward basic and acidic residues. Residues 903–915 (DETEGEEEEEAEE) show a composition bias toward acidic residues. The span at 942-959 (QSGTSSQRPERSTWNTAG) shows a compositional bias: polar residues.

It belongs to the calsyntenin family. Proteolytically processed under normal cellular conditions. A primary zeta-cleavage generates a large extracellular (soluble) N-terminal domain (sAlc) and a short C-terminal transmembrane fragment (CTF1). A secondary cleavage catalyzed by gamma-secretase within the transmembrane domain releases the beta-Alc-gamma chain in the extracellular milieu and produces an intracellular fragment (AlcICD). This processing is strongly suppressed in the tripartite complex formed with APBA2 and APP, which seems to prevent the association with PSEN1.

It localises to the postsynaptic cell membrane. It is found in the endoplasmic reticulum membrane. The protein localises to the golgi apparatus membrane. The protein resides in the cell projection. Its subcellular location is the dendrite. In terms of biological role, postsynaptic adhesion molecule that binds to presynaptic neurexins to mediate synapse formation, and which is involved in learning and memory. Promotes synapse development by acting as a cell adhesion molecule at the postsynaptic membrane, which associates with neurexin-alpha at the presynaptic membrane. The protein is Calsyntenin-2 of Rattus norvegicus (Rat).